Here is a 186-residue protein sequence, read N- to C-terminus: Small ribosomal subunit protein uS19 (186 aa).

The tract at residues 1–95 is unknown; the sequence is MREAIKRYGS…YEELYAQYKQ (95 aa). The small ribosomal subunit protein uS19 stretch occupies residues 96 to 186; it reads MTEKKAYVDP…EKTAKVVKKK (91 aa).

The protein belongs to the universal ribosomal protein uS19 family.

Functionally, protein S19 forms a complex with S13 that binds strongly to the 16S ribosomal RNA. This chain is Small ribosomal subunit protein uS19, found in Aquifex aeolicus (strain VF5).